A 289-amino-acid polypeptide reads, in one-letter code: Shikimate dehydrogenase (NADP(+)) (289 aa).

Residues 22 to 24 (SRS) and Thr-69 contribute to the shikimate site. The Proton acceptor role is filled by Lys-73. NADP(+) is bound at residue Glu-85. Residues Asn-94 and Asp-109 each contribute to the shikimate site. NADP(+)-binding positions include 134 to 138 (GAGGA), 158 to 163 (NRTLSR), and Ile-226. Residue Tyr-228 coordinates shikimate. Residue Gly-249 coordinates NADP(+).

Belongs to the shikimate dehydrogenase family. As to quaternary structure, homodimer.

The enzyme catalyses shikimate + NADP(+) = 3-dehydroshikimate + NADPH + H(+). It functions in the pathway metabolic intermediate biosynthesis; chorismate biosynthesis; chorismate from D-erythrose 4-phosphate and phosphoenolpyruvate: step 4/7. Functionally, involved in the biosynthesis of the chorismate, which leads to the biosynthesis of aromatic amino acids. Catalyzes the reversible NADPH linked reduction of 3-dehydroshikimate (DHSA) to yield shikimate (SA). The sequence is that of Shikimate dehydrogenase (NADP(+)) from Brucella abortus (strain S19).